The following is a 271-amino-acid chain: Probable ribosomal RNA small subunit methyltransferase A (271 aa).

S-adenosyl-L-methionine is bound by residues N22, L24, G49, E70, D97, and N112.

The protein belongs to the class I-like SAM-binding methyltransferase superfamily. rRNA adenine N(6)-methyltransferase family. RsmA subfamily.

The protein resides in the cytoplasm. Specifically dimethylates two adjacent adenosines in the loop of a conserved hairpin near the 3'-end of 16S rRNA in the 30S particle. May play a critical role in biogenesis of 30S subunits. This chain is Probable ribosomal RNA small subunit methyltransferase A, found in Methanosphaera stadtmanae (strain ATCC 43021 / DSM 3091 / JCM 11832 / MCB-3).